A 344-amino-acid chain; its full sequence is Succinylglutamate desuccinylase (344 aa).

The Zn(2+) site is built by His-63, Glu-66, and His-160. Residue Glu-224 is part of the active site.

It belongs to the AspA/AstE family. Succinylglutamate desuccinylase subfamily. Zn(2+) serves as cofactor.

The catalysed reaction is N-succinyl-L-glutamate + H2O = L-glutamate + succinate. Its pathway is amino-acid degradation; L-arginine degradation via AST pathway; L-glutamate and succinate from L-arginine: step 5/5. Transforms N(2)-succinylglutamate into succinate and glutamate. In Shewanella baltica (strain OS223), this protein is Succinylglutamate desuccinylase.